Reading from the N-terminus, the 365-residue chain is Ribosomal RNA large subunit methyltransferase F (365 aa).

The interval Met1–Pro48 is disordered. Over residues Ala33–Pro48 the composition is skewed to basic and acidic residues.

It belongs to the methyltransferase superfamily. METTL16/RlmF family.

The protein localises to the cytoplasm. The catalysed reaction is adenosine(1618) in 23S rRNA + S-adenosyl-L-methionine = N(6)-methyladenosine(1618) in 23S rRNA + S-adenosyl-L-homocysteine + H(+). Its function is as follows. Specifically methylates the adenine in position 1618 of 23S rRNA. This Shewanella baltica (strain OS223) protein is Ribosomal RNA large subunit methyltransferase F.